The chain runs to 437 residues: Amino-acid acetyltransferase (437 aa).

The region spanning 289–429 (ENIRLATSFD…EHYNYQRMSK (141 aa)) is the N-acetyltransferase domain.

It belongs to the acetyltransferase family. ArgA subfamily.

The protein resides in the cytoplasm. It catalyses the reaction L-glutamate + acetyl-CoA = N-acetyl-L-glutamate + CoA + H(+). Its pathway is amino-acid biosynthesis; L-arginine biosynthesis; N(2)-acetyl-L-ornithine from L-glutamate: step 1/4. The polypeptide is Amino-acid acetyltransferase (Actinobacillus pleuropneumoniae serotype 5b (strain L20)).